The sequence spans 410 residues: Alanine racemase (410 aa).

Positions 28–76 (VDFLHNVANKEEFAGNTSPRTAAYTLVREDASLGSTPKLPLGASYAKNL) constitute an RPE1 insert domain. Catalysis depends on K83, which acts as the Proton acceptor; specific for D-alanine. K83 bears the N6-(pyridoxal phosphate)lysine mark. R182 serves as a coordination point for substrate. Y305 acts as the Proton acceptor; specific for L-alanine in catalysis. Substrate is bound at residue M353.

This sequence belongs to the alanine racemase family. Pyridoxal 5'-phosphate is required as a cofactor.

It catalyses the reaction L-alanine = D-alanine. Its pathway is amino-acid biosynthesis; D-alanine biosynthesis; D-alanine from L-alanine: step 1/1. Functionally, catalyzes the interconversion of L-alanine and D-alanine. May also act on other amino acids. This Rickettsia bellii (strain RML369-C) protein is Alanine racemase (alr).